The sequence spans 166 residues: Ribosome maturation factor RimM (166 aa).

In terms of domain architecture, PRC barrel spans 94–166 (EGEYYLGKLI…IELKVLDLLK (73 aa)).

It belongs to the RimM family. Binds ribosomal protein uS19.

The protein resides in the cytoplasm. An accessory protein needed during the final step in the assembly of 30S ribosomal subunit, possibly for assembly of the head region. Essential for efficient processing of 16S rRNA. May be needed both before and after RbfA during the maturation of 16S rRNA. It has affinity for free ribosomal 30S subunits but not for 70S ribosomes. This is Ribosome maturation factor RimM from Borreliella burgdorferi (strain ATCC 35210 / DSM 4680 / CIP 102532 / B31) (Borrelia burgdorferi).